The primary structure comprises 140 residues: PDZ domain-containing protein 11 (140 aa).

A PDZ domain is found at 47–129 (IVTLKKPPGA…ISMRVRFFPY (83 aa)).

In terms of assembly, interacts with ATP2B1, ATP2B2, ATP2B3, ATP2B4 and ATP7A. Interacts with PLEKHA7 (via WW domains) at zonula adherens; this interaction is essential for the interaction between PLEKHA7 and the ADAM10-binding protein TSPAN33. Interacts with SLC5A6.

The protein resides in the cytoplasm. It localises to the cell junction. Its subcellular location is the adherens junction. It is found in the cell membrane. Functionally, mediates docking of ADAM10 to zonula adherens by interacting with PLEKHA7 which is required for PLEKHA7 to interact with the ADAM10-binding protein TSPAN33. The chain is PDZ domain-containing protein 11 (PDZD11) from Bos taurus (Bovine).